The chain runs to 229 residues: MAGVLVSGTDTGAGKTILCAALAAWWLAHRRTPAAILKPVQCGPGDREYYRTVFGDALSVLNPLYFEAPLAPPLAAAREGQTVDIGLLWKSYCEAAAGHALVLVEGVGGLGCPLGWDYTVADLARDWRLPVLLVAPLRLGVVGQLVAHTGFARAQNLDLSALVLSEIEPVSAEQRAQWADVQLIENLCHLPVLGVLSHLEAATDRAALAAAGSGLWLEAAGTLFTAERG.

Residue 12 to 17 (GAGKTI) participates in ATP binding. Position 16 (Thr16) interacts with Mg(2+). The active site involves Lys38. ATP-binding positions include Asp46, 105 to 108 (EGVG), and 165 to 166 (SE). Mg(2+)-binding residues include Asp46 and Glu105.

Belongs to the dethiobiotin synthetase family. Homodimer. Requires Mg(2+) as cofactor.

The protein resides in the cytoplasm. It catalyses the reaction (7R,8S)-7,8-diammoniononanoate + CO2 + ATP = (4R,5S)-dethiobiotin + ADP + phosphate + 3 H(+). The enzyme catalyses (7R,8S)-8-amino-7-(carboxyamino)nonanoate + ATP = (4R,5S)-dethiobiotin + ADP + phosphate + H(+). Its pathway is cofactor biosynthesis; biotin biosynthesis; biotin from 7,8-diaminononanoate: step 1/2. Its function is as follows. Catalyzes a mechanistically unusual reaction, the ATP-dependent insertion of CO2 between the N7 and N8 nitrogen atoms of 7,8-diaminopelargonic acid (DAPA, also called 7,8-diammoniononanoate) to form a ureido ring. This cyanobacterium does not encode bioA (which catalyzes the formation of the precursor for this reaction in the cannonical pathway), instead it encodes bioU, which replaces bioA and also performs the first half of the cannonical BioD reaction. Thus in this organism BioD has a different substrate. The polypeptide is ATP-dependent dethiobiotin synthetase BioD (Gloeobacter violaceus (strain ATCC 29082 / PCC 7421)).